A 184-amino-acid polypeptide reads, in one-letter code: HVA22-like protein c (184 aa).

3 helical membrane-spanning segments follow: residues 13–33 (VLIK…YPLY), 51–71 (LTYW…SKPL), and 73–93 (WFPI…LPQF).

This sequence belongs to the DP1 family. In terms of tissue distribution, predominantly expressed in flower buds and stem.

The protein resides in the membrane. The chain is HVA22-like protein c (HVA22C) from Arabidopsis thaliana (Mouse-ear cress).